The following is a 175-amino-acid chain: MEARLLSNVCGFFLVFLLQAESTRVELVPEKIAGFWKEVAVASDQKLVLKAQRRVEGLFLTFSGGNVTVKAVYNSSGSCVTESSLGSERDTVGEFAFPGNREIHVLDTDYERYTILKLTLLWQGRNFHVLKYFTRSLENEDEPGFWLFREMTADQGLYMLARHGRCAELLKEGLV.

Positions 1–22 (MEARLLSNVCGFFLVFLLQAES) are cleaved as a signal peptide. Residues Asn66 and Asn74 are each glycosylated (N-linked (GlcNAc...) asparagine). Cys79 and Cys166 form a disulfide bridge.

This sequence belongs to the calycin superfamily. Lipocalin family. As to expression, predominantly expressed in epididymis.

It is found in the secreted. Its function is as follows. May play a role in male fertility. May act as a retinoid carrier protein within the epididymis. This chain is Epididymal-specific lipocalin-8 (Lcn8), found in Mus musculus (Mouse).